The sequence spans 423 residues: Serine--tRNA ligase (423 aa).

Residues 107-130 (PHDSVPDGKSENDNREIRQWGAPP) form a disordered region. A compositionally biased stretch (basic and acidic residues) spans 110 to 124 (SVPDGKSENDNREIR). 231-233 (TGE) lines the L-serine pocket. 262 to 264 (RSE) contacts ATP. An L-serine-binding site is contributed by glutamate 285. 349–352 (EISS) serves as a coordination point for ATP. Serine 385 is an L-serine binding site.

This sequence belongs to the class-II aminoacyl-tRNA synthetase family. Type-1 seryl-tRNA synthetase subfamily. In terms of assembly, homodimer. The tRNA molecule binds across the dimer.

It is found in the cytoplasm. It carries out the reaction tRNA(Ser) + L-serine + ATP = L-seryl-tRNA(Ser) + AMP + diphosphate + H(+). The catalysed reaction is tRNA(Sec) + L-serine + ATP = L-seryl-tRNA(Sec) + AMP + diphosphate + H(+). It participates in aminoacyl-tRNA biosynthesis; selenocysteinyl-tRNA(Sec) biosynthesis; L-seryl-tRNA(Sec) from L-serine and tRNA(Sec): step 1/1. Catalyzes the attachment of serine to tRNA(Ser). Is also able to aminoacylate tRNA(Sec) with serine, to form the misacylated tRNA L-seryl-tRNA(Sec), which will be further converted into selenocysteinyl-tRNA(Sec). This Coxiella burnetii (strain Dugway 5J108-111) protein is Serine--tRNA ligase.